Here is a 314-residue protein sequence, read N- to C-terminus: Adenosine receptor A3 (314 aa).

At 1 to 14 (MAVNGTALLLANVT) the chain is on the extracellular side. Asn4 and Asn12 each carry an N-linked (GlcNAc...) asparagine glycan. The chain crosses the membrane as a helical span at residues 15–37 (YITVEILIGLCAIVGNVLVIWVV). At 38–48 (KLNPSLQTTTF) the chain is on the cytoplasmic side. A helical membrane pass occupies residues 49 to 72 (YFIVSLALADIAVGVLVMPLAIVI). At 73-84 (SLGITIQFYNCL) the chain is on the extracellular side. Residues Cys83 and Cys166 are joined by a disulfide bond. A helical membrane pass occupies residues 85 to 106 (FMTCLLLIFTHASIMSLLAIAV). Topologically, residues 107-126 (DRYLRVKLTVRYRRVTTQRR) are cytoplasmic. A helical transmembrane segment spans residues 127-148 (IWLALGLCWLVSFLVGLTPMFG). Over 149–177 (WNMKLTSEHQRNVTFLSCQFSSVMRMDYM) the chain is Extracellular. A glycan (N-linked (GlcNAc...) asparagine) is linked at Asn160. Residues 178-198 (VYFSFFTWILIPLVVMCAIYL) traverse the membrane as a helical segment. At 199–231 (DIFYVIRNKLNQNFSSSKETGAFYGREFKTAKS) the chain is on the cytoplasmic side. A helical transmembrane segment spans residues 232-255 (LFLVLFLFAFSWLPLSIINCITYF). Residues 256–261 (HGEVPQ) lie on the Extracellular side of the membrane. The helical transmembrane segment at 262 to 284 (IILYLGILLSHANSMMNPIVYAY) threads the bilayer. Residues 285-314 (KIKKFKETYLLIFKTYMICQSSDSLDSSTE) are Cytoplasmic-facing. The S-palmitoyl cysteine moiety is linked to residue Cys303.

This sequence belongs to the G-protein coupled receptor 1 family.

The protein localises to the cell membrane. Functionally, receptor for adenosine. The activity of this receptor is mediated by G proteins which inhibits adenylyl cyclase. In Canis lupus familiaris (Dog), this protein is Adenosine receptor A3 (ADORA3).